A 451-amino-acid chain; its full sequence is 3-phosphoshikimate 1-carboxyvinyltransferase (451 aa).

Residues lysine 28, serine 29, and arginine 33 each coordinate 3-phosphoshikimate. Position 28 (lysine 28) interacts with phosphoenolpyruvate. Glycine 105 and arginine 133 together coordinate phosphoenolpyruvate. 4 residues coordinate 3-phosphoshikimate: serine 178, glutamine 180, aspartate 331, and lysine 358. A phosphoenolpyruvate-binding site is contributed by glutamine 180. Aspartate 331 serves as the catalytic Proton acceptor. The phosphoenolpyruvate site is built by arginine 362 and arginine 406.

This sequence belongs to the EPSP synthase family. Monomer.

It localises to the cytoplasm. It carries out the reaction 3-phosphoshikimate + phosphoenolpyruvate = 5-O-(1-carboxyvinyl)-3-phosphoshikimate + phosphate. Its pathway is metabolic intermediate biosynthesis; chorismate biosynthesis; chorismate from D-erythrose 4-phosphate and phosphoenolpyruvate: step 6/7. Catalyzes the transfer of the enolpyruvyl moiety of phosphoenolpyruvate (PEP) to the 5-hydroxyl of shikimate-3-phosphate (S3P) to produce enolpyruvyl shikimate-3-phosphate and inorganic phosphate. The chain is 3-phosphoshikimate 1-carboxyvinyltransferase from Rhodospirillum rubrum (strain ATCC 11170 / ATH 1.1.1 / DSM 467 / LMG 4362 / NCIMB 8255 / S1).